The sequence spans 611 residues: UvrABC system protein C (611 aa).

The GIY-YIG domain occupies 12–96 (DQPGIYQYFD…IKQLKPKYNI (85 aa)). The UVR domain occupies 202 to 237 (EKILEILNQKMQKYAENLQFEEAAEIRDRIKSIESA).

It belongs to the UvrC family. In terms of assembly, interacts with UvrB in an incision complex.

The protein resides in the cytoplasm. In terms of biological role, the UvrABC repair system catalyzes the recognition and processing of DNA lesions. UvrC both incises the 5' and 3' sides of the lesion. The N-terminal half is responsible for the 3' incision and the C-terminal half is responsible for the 5' incision. This is UvrABC system protein C from Nautilia profundicola (strain ATCC BAA-1463 / DSM 18972 / AmH).